Here is a 255-residue protein sequence, read N- to C-terminus: MRSDGRKEDQLRPVSIQRDFLEYPEGSCLISFGKTKVICTASVIENVPNWLKGKGQGWITAEYSMLPRATQQRTIRESVQGRIGGRTHEIQRMIGRAMRTAVELTKIGERTIWVDCDVIQADGGTRTAAITGAFVAVADAIIKLHKEGIIEETPIKDFVAAVSVGIVNDRILLDLNFEEDSAAQVDMNVVGTGSGRLSEVHTMGEEYSFTKDELIKMLDLAQKGINELIELQKKLYVIQDGKWERSELKEVSSTT.

Residues R86 and 124–126 contribute to the phosphate site; that span reads GTR.

This sequence belongs to the RNase PH family. As to quaternary structure, homohexameric ring arranged as a trimer of dimers.

The catalysed reaction is tRNA(n+1) + phosphate = tRNA(n) + a ribonucleoside 5'-diphosphate. Functionally, phosphorolytic 3'-5' exoribonuclease that plays an important role in tRNA 3'-end maturation. Removes nucleotide residues following the 3'-CCA terminus of tRNAs; can also add nucleotides to the ends of RNA molecules by using nucleoside diphosphates as substrates, but this may not be physiologically important. Probably plays a role in initiation of 16S rRNA degradation (leading to ribosome degradation) during starvation. In Aquifex aeolicus (strain VF5), this protein is Ribonuclease PH.